We begin with the raw amino-acid sequence, 846 residues long: Penicillin G acylase (846 aa).

The first 26 residues, 1 to 26 (MKNRNRMIVNCVTASLMYYWSLPALA), serve as a signal peptide directing secretion. Glu-178 is a binding site for Ca(2+). The propeptide at 236 to 289 (ALLPRYDLPAPMLDRPAKGADGALLALTAGKNRETIAAQFAQGGANGLAGYPTT) is spacer peptide. The Nucleophile role is filled by Ser-290. Asp-362, Val-364, Asp-365, Pro-494, and Asp-541 together coordinate Ca(2+).

Belongs to the peptidase S45 family. In terms of assembly, heterodimer of an alpha subunit and a beta subunit processed from the same precursor. Ca(2+) is required as a cofactor.

The protein resides in the periplasm. The catalysed reaction is a penicillin + H2O = 6-aminopenicillanate + a carboxylate. This chain is Penicillin G acylase (pac), found in Escherichia coli.